Here is a 169-residue protein sequence, read N- to C-terminus: Large ribosomal subunit protein uL10 (169 aa).

The protein belongs to the universal ribosomal protein uL10 family. In terms of assembly, part of the ribosomal stalk of the 50S ribosomal subunit. The N-terminus interacts with L11 and the large rRNA to form the base of the stalk. The C-terminus forms an elongated spine to which L12 dimers bind in a sequential fashion forming a multimeric L10(L12)X complex.

Its function is as follows. Forms part of the ribosomal stalk, playing a central role in the interaction of the ribosome with GTP-bound translation factors. This is Large ribosomal subunit protein uL10 from Staphylococcus saprophyticus subsp. saprophyticus (strain ATCC 15305 / DSM 20229 / NCIMB 8711 / NCTC 7292 / S-41).